A 333-amino-acid polypeptide reads, in one-letter code: Protoheme IX farnesyltransferase (333 aa).

The next 8 membrane-spanning stretches (helical) occupy residues 63 to 83 (LACT…LNCI), 109 to 129 (AAFI…VSGV), 132 to 152 (LAAG…TAIL), 160 to 180 (IVIG…AASG), 188 to 208 (WLFS…ALLL), 214 to 234 (AVGI…RAIS), 245 to 265 (GFGV…LIPF), and 292 to 312 (WSIF…LPMA).

It belongs to the UbiA prenyltransferase family. Protoheme IX farnesyltransferase subfamily.

It localises to the cell inner membrane. The enzyme catalyses heme b + (2E,6E)-farnesyl diphosphate + H2O = Fe(II)-heme o + diphosphate. Its pathway is porphyrin-containing compound metabolism; heme O biosynthesis; heme O from protoheme: step 1/1. Functionally, converts heme B (protoheme IX) to heme O by substitution of the vinyl group on carbon 2 of heme B porphyrin ring with a hydroxyethyl farnesyl side group. In Prochlorococcus marinus (strain MIT 9313), this protein is Protoheme IX farnesyltransferase.